A 461-amino-acid polypeptide reads, in one-letter code: Metacaspase-1 (461 aa).

Gly residues-rich tracts occupy residues M1 to G21, Q45 to P66, Q74 to P86, and P105 to G119. The segment at M1–T154 is disordered. 2 stretches are compositionally biased toward low complexity: residues G121–Q131 and H138–N148. Active-site residues include H252 and C308.

It belongs to the peptidase C14B family.

Involved in cell death (apoptosis). The polypeptide is Metacaspase-1 (MCA1) (Yarrowia lipolytica (strain CLIB 122 / E 150) (Yeast)).